The primary structure comprises 146 residues: Hemoglobin subunit beta-2 (146 aa).

The Globin domain occupies 2–146; the sequence is HWTAEEKQLI…VAHALARRYH (145 aa). Heme b is bound by residues His63 and His92.

This sequence belongs to the globin family. Heterotetramer of two alpha chains and two beta chains. In terms of tissue distribution, red blood cells.

Involved in oxygen transport from the lung to the various peripheral tissues. This is Hemoglobin subunit beta-2 from Iguana iguana (Common iguana).